The chain runs to 102 residues: Small ribosomal subunit protein uS10 (102 aa).

It belongs to the universal ribosomal protein uS10 family. As to quaternary structure, part of the 30S ribosomal subunit.

In terms of biological role, involved in the binding of tRNA to the ribosomes. The polypeptide is Small ribosomal subunit protein uS10 (Leptospira borgpetersenii serovar Hardjo-bovis (strain JB197)).